The sequence spans 364 residues: Methylthioribose-1-phosphate isomerase (364 aa).

The active-site Proton donor is aspartate 254.

This sequence belongs to the eIF-2B alpha/beta/delta subunits family. MtnA subfamily.

Its subcellular location is the cytoplasm. It is found in the nucleus. The catalysed reaction is 5-(methylsulfanyl)-alpha-D-ribose 1-phosphate = 5-(methylsulfanyl)-D-ribulose 1-phosphate. It functions in the pathway amino-acid biosynthesis; L-methionine biosynthesis via salvage pathway; L-methionine from S-methyl-5-thio-alpha-D-ribose 1-phosphate: step 1/6. Catalyzes the interconversion of methylthioribose-1-phosphate (MTR-1-P) into methylthioribulose-1-phosphate (MTRu-1-P). The chain is Methylthioribose-1-phosphate isomerase from Drosophila yakuba (Fruit fly).